The sequence spans 487 residues: uncharacterized protein (487 aa).

A helical membrane pass occupies residues 7–28 (HVISIFETLGAYFINIFYNFLY). N-linked (GlcNAc...) asparagine; by host glycosylation is found at Asn-73, Asn-83, and Asn-195. Positions 196-235 (RSLLHQIEELTSEKKSLLADLSTLRKKYEKRQSEYRRLVQ) form a coiled coil. Residues 294-305 (TSQELTSKSPNN) are compositionally biased toward polar residues. Residues 294 to 324 (TSQELTSKSPNNYPVPHSRTIVSKPSDNYPV) are disordered. N-linked (GlcNAc...) asparagine; by host glycosylation occurs at Asn-462.

This sequence belongs to the asfivirus B475L family.

The protein resides in the host membrane. This is an uncharacterized protein from African swine fever virus (isolate Tick/South Africa/Pretoriuskop Pr4/1996) (ASFV).